A 179-amino-acid polypeptide reads, in one-letter code: Inner membrane-spanning protein YciB (179 aa).

5 consecutive transmembrane segments (helical) span residues 22–42 (IYAA…YSWV), 50–70 (MALI…FFHN), 76–96 (WKVT…QWVM), 121–141 (LAWA…AFWL), and 149–169 (FKVF…GIYI).

This sequence belongs to the YciB family.

The protein localises to the cell inner membrane. Functionally, plays a role in cell envelope biogenesis, maintenance of cell envelope integrity and membrane homeostasis. The protein is Inner membrane-spanning protein YciB of Escherichia coli O127:H6 (strain E2348/69 / EPEC).